The chain runs to 232 residues: Phosphoribosylformylglycinamidine synthase subunit PurQ (232 aa).

Residues 3–232 enclose the Glutamine amidotransferase type-1 domain; it reads FAVIVFPGSN…SLVASALAVV (230 aa). The active-site Nucleophile is Cys86. Active-site residues include His203 and Glu205.

Part of the FGAM synthase complex composed of 1 PurL, 1 PurQ and 2 PurS subunits.

The protein localises to the cytoplasm. The enzyme catalyses N(2)-formyl-N(1)-(5-phospho-beta-D-ribosyl)glycinamide + L-glutamine + ATP + H2O = 2-formamido-N(1)-(5-O-phospho-beta-D-ribosyl)acetamidine + L-glutamate + ADP + phosphate + H(+). It carries out the reaction L-glutamine + H2O = L-glutamate + NH4(+). It functions in the pathway purine metabolism; IMP biosynthesis via de novo pathway; 5-amino-1-(5-phospho-D-ribosyl)imidazole from N(2)-formyl-N(1)-(5-phospho-D-ribosyl)glycinamide: step 1/2. Functionally, part of the phosphoribosylformylglycinamidine synthase complex involved in the purines biosynthetic pathway. Catalyzes the ATP-dependent conversion of formylglycinamide ribonucleotide (FGAR) and glutamine to yield formylglycinamidine ribonucleotide (FGAM) and glutamate. The FGAM synthase complex is composed of three subunits. PurQ produces an ammonia molecule by converting glutamine to glutamate. PurL transfers the ammonia molecule to FGAR to form FGAM in an ATP-dependent manner. PurS interacts with PurQ and PurL and is thought to assist in the transfer of the ammonia molecule from PurQ to PurL. The polypeptide is Phosphoribosylformylglycinamidine synthase subunit PurQ (Gloeobacter violaceus (strain ATCC 29082 / PCC 7421)).